We begin with the raw amino-acid sequence, 654 residues long: Integrator complex subunit 9 (654 aa).

1D-myo-inositol hexakisphosphate-binding residues include methionine 1, arginine 2, threonine 18, phenylalanine 19, arginine 504, lysine 508, and arginine 509.

Belongs to the metallo-beta-lactamase superfamily. RNA-metabolizing metallo-beta-lactamase-like family. INTS9 subfamily. In terms of assembly, belongs to the multiprotein complex Integrator, at least composed of IntS1, IntS2, IntS3, IntS4, omd/IntS5, IntS6, defl/IntS7, IntS8, IntS9, IntS10, IntS11, IntS12, asun/IntS13, IntS14 and IntS15. The core complex associates with protein phosphatase 2A subunits mts/PP2A and Pp2A-29B, to form the Integrator-PP2A (INTAC) complex. Within the complex, interacts with IntS1 and IntS12. IntS9 is part of the RNA endonuclease subcomplex, composed of IntS4, IntS9, IntS11 and inositol hexakisphosphate (InsP6).

It is found in the nucleus. It localises to the cytoplasm. Its subcellular location is the cytosol. Component of the integrator complex, a multiprotein complex that terminates RNA polymerase II (Pol II) transcription in the promoter-proximal region of genes. The integrator complex provides a quality checkpoint during transcription elongation by driving premature transcription termination of transcripts that are unfavorably configured for transcriptional elongation: the complex terminates transcription by (1) catalyzing dephosphorylation of the C-terminal domain (CTD) of Pol II subunit Polr2A/Rbp1 and Spt5, and (2) degrading the exiting nascent RNA transcript via endonuclease activity. The integrator complex is also involved in the 3'-end processing of the U7 snRNA, and also the spliceosomal snRNAs U1, U2, U4 and U5. This Drosophila melanogaster (Fruit fly) protein is Integrator complex subunit 9.